Here is a 136-residue protein sequence, read N- to C-terminus: Small ribosomal subunit protein bS6 (136 aa).

The tract at residues 96–136 is disordered; it reads VTEPSALARSGSDAEADRAPADEGSVEAAGAEPGSEAEAEA.

It belongs to the bacterial ribosomal protein bS6 family.

Binds together with bS18 to 16S ribosomal RNA. The chain is Small ribosomal subunit protein bS6 from Methylococcus capsulatus (strain ATCC 33009 / NCIMB 11132 / Bath).